We begin with the raw amino-acid sequence, 1407 residues long: Probable phosphoribosylformylglycinamidine synthase, chloroplastic/mitochondrial (1407 aa).

The transit peptide at Met-1 to Arg-53 directs the protein to the chloroplast and mitochondrion. Residues Gly-407 to Asp-418, Gln-487 to Tyr-489, and Ala-786 contribute to the ATP site. Mg(2+) contacts are provided by Asp-787, Glu-826, Asn-830, and Asp-989. Ser-991 contributes to the ATP binding site. The region spanning Lys-1141–Thr-1381 is the Glutamine amidotransferase type-1 domain. The active-site Nucleophile is the Cys-1235. Active-site residues include His-1366 and Glu-1368.

It in the N-terminal section; belongs to the FGAMS family.

It localises to the plastid. The protein localises to the chloroplast. It is found in the mitochondrion. It carries out the reaction N(2)-formyl-N(1)-(5-phospho-beta-D-ribosyl)glycinamide + L-glutamine + ATP + H2O = 2-formamido-N(1)-(5-O-phospho-beta-D-ribosyl)acetamidine + L-glutamate + ADP + phosphate + H(+). The protein operates within purine metabolism; IMP biosynthesis via de novo pathway; 5-amino-1-(5-phospho-D-ribosyl)imidazole from N(2)-formyl-N(1)-(5-phospho-D-ribosyl)glycinamide: step 1/2. Essential to the male gametophyte development. Phosphoribosylformylglycinamidine synthase involved in the purines biosynthetic pathway. Catalyzes the ATP-dependent conversion of formylglycinamide ribonucleotide (FGAR) and glutamine to yield formylglycinamidine ribonucleotide (FGAM) and glutamate. The sequence is that of Probable phosphoribosylformylglycinamidine synthase, chloroplastic/mitochondrial from Arabidopsis thaliana (Mouse-ear cress).